We begin with the raw amino-acid sequence, 430 residues long: MSKTHLTEQKFSDFALHPQVIEALESKGFHYCTPIQALALPLTLSGRDVAGQAQTGTGKTLAFLASTFHYLLSHPANAERQTNQPRALIMAPTRELAVQIHSDAEALSHLTGLKLGLAYGGDGYDKQLKVLENGVDILVGTTGRLIDYAKQNHINLGAIQVVVLDEADRMYDLGFIKDIRWLFRRMPATSQRLNMLFSATLSYRVRELAFEQMNNAEYVEVEPEQKTGHRITEELFYPSNEEKMRLLQTLLEEEWPDRCIIFANTKHRCEDVWGHLAADGHRVGLLTGDVAQKKRLRILEEFTQGSIDILVATDVAARGLHIPSVTHVFNYDLPDDCEDYVHRIGRTGRAGQSGFSISLACEEYALNLPAIETYIGHGIPLSKYNSDALMNDLPAPKRLTRPPRSNNGPRRHNSAPRRSGAPRNNRKRAD.

Residues 9–37 (QKFSDFALHPQVIEALESKGFHYCTPIQA) carry the Q motif motif. A Helicase ATP-binding domain is found at 40–219 (LPLTLSGRDV…FEQMNNAEYV (180 aa)). 53 to 60 (AQTGTGKT) is an ATP binding site. The DEAD box motif lies at 165–168 (DEAD). One can recognise a Helicase C-terminal domain in the interval 245-390 (RLLQTLLEEE…LSKYNSDALM (146 aa)). Residues 392-430 (DLPAPKRLTRPPRSNNGPRRHNSAPRRSGAPRNNRKRAD) form a disordered region.

The protein belongs to the DEAD box helicase family. RhlB subfamily. In terms of assembly, component of the RNA degradosome, which is a multiprotein complex involved in RNA processing and mRNA degradation.

The protein resides in the cytoplasm. The catalysed reaction is ATP + H2O = ADP + phosphate + H(+). Its function is as follows. DEAD-box RNA helicase involved in RNA degradation. Has RNA-dependent ATPase activity and unwinds double-stranded RNA. The sequence is that of ATP-dependent RNA helicase RhlB from Pectobacterium atrosepticum (strain SCRI 1043 / ATCC BAA-672) (Erwinia carotovora subsp. atroseptica).